Consider the following 513-residue polypeptide: ATP synthase subunit alpha (513 aa).

169-176 (GDRQTGKT) provides a ligand contact to ATP.

The protein belongs to the ATPase alpha/beta chains family. In terms of assembly, F-type ATPases have 2 components, CF(1) - the catalytic core - and CF(0) - the membrane proton channel. CF(1) has five subunits: alpha(3), beta(3), gamma(1), delta(1), epsilon(1). CF(0) has three main subunits: a(1), b(2) and c(9-12). The alpha and beta chains form an alternating ring which encloses part of the gamma chain. CF(1) is attached to CF(0) by a central stalk formed by the gamma and epsilon chains, while a peripheral stalk is formed by the delta and b chains.

Its subcellular location is the cell inner membrane. It carries out the reaction ATP + H2O + 4 H(+)(in) = ADP + phosphate + 5 H(+)(out). In terms of biological role, produces ATP from ADP in the presence of a proton gradient across the membrane. The alpha chain is a regulatory subunit. The protein is ATP synthase subunit alpha of Salmonella agona (strain SL483).